A 320-amino-acid polypeptide reads, in one-letter code: Malate dehydrogenase (320 aa).

NAD(+)-binding positions include 10–15 (GSGMIG) and Asp34. Substrate contacts are provided by Arg83 and Arg89. NAD(+) contacts are provided by residues Asn96 and 119–121 (ITN). Asn121 and Arg152 together coordinate substrate. His176 acts as the Proton acceptor in catalysis.

The protein belongs to the LDH/MDH superfamily. MDH type 3 family.

It carries out the reaction (S)-malate + NAD(+) = oxaloacetate + NADH + H(+). In terms of biological role, catalyzes the reversible oxidation of malate to oxaloacetate. The protein is Malate dehydrogenase of Allorhizobium ampelinum (strain ATCC BAA-846 / DSM 112012 / S4) (Agrobacterium vitis (strain S4)).